Here is a 309-residue protein sequence, read N- to C-terminus: Olfactory receptor 7A10 (309 aa).

The Extracellular portion of the chain corresponds to methionine 1–alanine 25. Asparagine 5 carries N-linked (GlcNAc...) asparagine glycosylation. The helical transmembrane segment at phenylalanine 26–isoleucine 46 threads the bilayer. Over leucine 47–histidine 54 the chain is Cytoplasmic. A helical membrane pass occupies residues leucine 55–serine 75. Over threonine 76–threonine 99 the chain is Extracellular. Residues cysteine 97 and cysteine 189 are joined by a disulfide bond. A helical membrane pass occupies residues glutamine 100–tyrosine 120. Topologically, residues aspartate 121–glutamine 139 are cytoplasmic. The helical transmembrane segment at leucine 140–serine 160 threads the bilayer. The Extracellular portion of the chain corresponds to leucine 161–isoleucine 197. A helical membrane pass occupies residues valine 198–serine 217. Residues tyrosine 218 to alanine 237 lie on the Cytoplasmic side of the membrane. A helical transmembrane segment spans residues phenylalanine 238–valine 258. The Extracellular portion of the chain corresponds to tyrosine 259–glycine 271. The helical transmembrane segment at alanine 272–leucine 292 threads the bilayer. At arginine 293–glutamine 309 the chain is on the cytoplasmic side.

Belongs to the G-protein coupled receptor 1 family.

It is found in the cell membrane. Its function is as follows. Odorant receptor. This chain is Olfactory receptor 7A10 (OR7A10), found in Homo sapiens (Human).